Consider the following 139-residue polypeptide: uncharacterized protein (139 aa).

2 consecutive transmembrane segments (helical) span residues 35 to 55 (LVFL…SFLI) and 57 to 77 (FGIL…LTVI).

It localises to the membrane. This is an uncharacterized protein from Saccharomyces cerevisiae (strain ATCC 204508 / S288c) (Baker's yeast).